A 138-amino-acid chain; its full sequence is Basic phospholipase A2 BP-III (138 aa).

An N-terminal signal peptide occupies residues 1 to 16 (MRTLWIMAVLLVGVDG). 7 cysteine pairs are disulfide-bonded: Cys42–Cys132, Cys44–Cys60, Cys59–Cys112, Cys65–Cys138, Cys66–Cys105, Cys73–Cys98, and Cys91–Cys103. 2 residues coordinate Ca(2+): Gly45 and Gly47. Residue His63 is part of the active site. Asp106 is a catalytic residue.

The protein belongs to the phospholipase A2 family. Group II subfamily. K49 sub-subfamily. The cofactor is Ca(2+). As to expression, expressed by the venom gland.

It localises to the secreted. It carries out the reaction a 1,2-diacyl-sn-glycero-3-phosphocholine + H2O = a 1-acyl-sn-glycero-3-phosphocholine + a fatty acid + H(+). Its function is as follows. Snake venom phospholipase A2 (PLA2) that has low phospholipase A2 activity. Shows anticoagulant activities, strong myolytic activity, infiltration of polymorphonuclear cells, and edema in stromal tissues. Induces cell death of Jurkat cells in a concentration dependent manner. PLA2 catalyzes the calcium-dependent hydrolysis of the 2-acyl groups in 3-sn-phosphoglycerides. This Protobothrops flavoviridis (Habu) protein is Basic phospholipase A2 BP-III.